A 476-amino-acid chain; its full sequence is Carbamoyl phosphate synthase arginine-specific small chain (476 aa).

The N-terminal 24 residues, 1–24 (MFSHLLKPAARSAGLLGHVNRRYL), are a transit peptide targeting the mitochondrion. The region spanning 228–415 (HVALIDCGVK…IQNVQRYKDH (188 aa)) is the Glutamine amidotransferase type-1 domain. Cysteine 304 (nucleophile) is an active-site residue. Active-site residues include histidine 388 and glutamate 390.

Belongs to the CarA family. Heterodimer composed of 2 chains; the small (or glutamine) chain promotes the hydrolysis of glutamine to ammonia, which is used by the large (or ammonia) chain to synthesize carbamoyl phosphate.

The protein resides in the mitochondrion matrix. It catalyses the reaction hydrogencarbonate + L-glutamine + 2 ATP + H2O = carbamoyl phosphate + L-glutamate + 2 ADP + phosphate + 2 H(+). It carries out the reaction L-glutamine + H2O = L-glutamate + NH4(+). It functions in the pathway amino-acid biosynthesis; L-arginine biosynthesis; carbamoyl phosphate from bicarbonate: step 1/1. In terms of biological role, small subunit of the arginine-specific carbamoyl phosphate synthase (CPSase). CPSase catalyzes the formation of carbamoyl phosphate from the ammonia moiety of glutamine, carbonate, and phosphate donated by ATP, the first step of the arginine biosynthetic pathway. The small subunit (glutamine amidotransferase) binds and cleaves glutamine to supply the large subunit with the substrate ammonia. This is Carbamoyl phosphate synthase arginine-specific small chain (CPA1) from Phaeosphaeria nodorum (strain SN15 / ATCC MYA-4574 / FGSC 10173) (Glume blotch fungus).